The sequence spans 597 residues: Kelch-like protein 21 (597 aa).

One can recognise a BTB domain in the interval 35–103; sequence LDVTLEAAGG…SYTGRVAVSG (69 aa). The BACK domain occupies 138-239; the sequence is CLDMQDFAEA…RRFYLLAHVE (102 aa). 6 Kelch repeats span residues 287–335, 336–382, 384–422, 424–463, 464–512, and 513–560; these read ILVL…ALGN, DIYV…VLDG, LYVVAADSTERYDHTTDSWEALQPMTYPMDNCSTTACRG, LYAIGSLAGKETMVMQCYHPDMDLWSLVDCGQLPPWSFAP, KTVT…VLGG, and KLYV…SIFR. Residues 570 to 597 form a disordered region; it reads GRGFELDGGSSDMDVGQPRPPQNPAELH. Pro residues predominate over residues 587-597; the sequence is PRPPQNPAELH.

As to quaternary structure, component of the BCR(KLHL21) E3 ubiquitin ligase complex, at least composed of CUL3, KLHL21 and RBX1.

The protein resides in the cytoplasm. It localises to the cytoskeleton. Its subcellular location is the spindle. It functions in the pathway protein modification; protein ubiquitination. Functionally, substrate-specific adapter of a BCR (BTB-CUL3-RBX1) E3 ubiquitin-protein ligase complex required for efficient chromosome alignment and cytokinesis. The BCR(KLHL21) E3 ubiquitin ligase complex regulates localization of the chromosomal passenger complex (CPC) from chromosomes to the spindle midzone in anaphase and mediates the ubiquitination of AURKB. Ubiquitination of AURKB by BCR(KLHL21) E3 ubiquitin ligase complex may not lead to its degradation by the proteasome. The chain is Kelch-like protein 21 (KLHL21) from Bos taurus (Bovine).